Reading from the N-terminus, the 125-residue chain is Large ribosomal subunit protein bL12 (125 aa).

It belongs to the bacterial ribosomal protein bL12 family. In terms of assembly, homodimer. Part of the ribosomal stalk of the 50S ribosomal subunit. Forms a multimeric L10(L12)X complex, where L10 forms an elongated spine to which 2 to 4 L12 dimers bind in a sequential fashion. Binds GTP-bound translation factors.

In terms of biological role, forms part of the ribosomal stalk which helps the ribosome interact with GTP-bound translation factors. Is thus essential for accurate translation. This is Large ribosomal subunit protein bL12 from Campylobacter jejuni subsp. jejuni serotype O:2 (strain ATCC 700819 / NCTC 11168).